The chain runs to 226 residues: ATP synthase F(0) complex subunit a (226 aa).

Transmembrane regions (helical) follow at residues 5-25, 68-88, 97-117, 136-156, 179-199, and 201-221; these read LFAP…LIII, WSLM…LGML, QLSM…ATGF, FLIP…PVAL, LVLM…LALL, and ILEF…VSLY.

This sequence belongs to the ATPase A chain family. Component of the ATP synthase complex composed at least of ATP5F1A/subunit alpha, ATP5F1B/subunit beta, ATP5MC1/subunit c (homooctomer), MT-ATP6/subunit a, MT-ATP8/subunit 8, ATP5ME/subunit e, ATP5MF/subunit f, ATP5MG/subunit g, ATP5MK/subunit k, ATP5MJ/subunit j, ATP5F1C/subunit gamma, ATP5F1D/subunit delta, ATP5F1E/subunit epsilon, ATP5PF/subunit F6, ATP5PB/subunit b, ATP5PD/subunit d, ATP5PO/subunit OSCP. ATP synthase complex consists of a soluble F(1) head domain (subunits alpha(3) and beta(3)) - the catalytic core - and a membrane F(0) domain - the membrane proton channel (subunits c, a, 8, e, f, g, k and j). These two domains are linked by a central stalk (subunits gamma, delta, and epsilon) rotating inside the F1 region and a stationary peripheral stalk (subunits F6, b, d, and OSCP). Interacts with DNAJC30; interaction is direct.

It localises to the mitochondrion inner membrane. It catalyses the reaction H(+)(in) = H(+)(out). Functionally, subunit a, of the mitochondrial membrane ATP synthase complex (F(1)F(0) ATP synthase or Complex V) that produces ATP from ADP in the presence of a proton gradient across the membrane which is generated by electron transport complexes of the respiratory chain. ATP synthase complex consist of a soluble F(1) head domain - the catalytic core - and a membrane F(1) domain - the membrane proton channel. These two domains are linked by a central stalk rotating inside the F(1) region and a stationary peripheral stalk. During catalysis, ATP synthesis in the catalytic domain of F(1) is coupled via a rotary mechanism of the central stalk subunits to proton translocation. With the subunit c (ATP5MC1), forms the proton-conducting channel in the F(0) domain, that contains two crucial half-channels (inlet and outlet) that facilitate proton movement from the mitochondrial intermembrane space (IMS) into the matrix. Protons are taken up via the inlet half-channel and released through the outlet half-channel, following a Grotthuss mechanism. The protein is ATP synthase F(0) complex subunit a of Balaenoptera musculus (Blue whale).